The sequence spans 308 residues: Ferredoxin--NADP reductase (308 aa).

FAD is bound by residues E26, Q34, Y39, V77, F106, D266, and T306.

The protein belongs to the ferredoxin--NADP reductase type 2 family. In terms of assembly, homodimer. FAD is required as a cofactor.

It catalyses the reaction 2 reduced [2Fe-2S]-[ferredoxin] + NADP(+) + H(+) = 2 oxidized [2Fe-2S]-[ferredoxin] + NADPH. This is Ferredoxin--NADP reductase from Lactobacillus delbrueckii subsp. bulgaricus (strain ATCC 11842 / DSM 20081 / BCRC 10696 / JCM 1002 / NBRC 13953 / NCIMB 11778 / NCTC 12712 / WDCM 00102 / Lb 14).